Here is a 907-residue protein sequence, read N- to C-terminus: Protein translocase subunit SecA (907 aa).

Residues glutamine 87, 105–109, and aspartate 511 each bind ATP; that span reads GEGKT. Zn(2+) is bound by residues cysteine 891, cysteine 893, cysteine 902, and histidine 903.

The protein belongs to the SecA family. In terms of assembly, monomer and homodimer. Part of the essential Sec protein translocation apparatus which comprises SecA, SecYEG and auxiliary proteins SecDF-YajC and YidC. Zn(2+) is required as a cofactor.

The protein localises to the cell inner membrane. It localises to the cytoplasm. The catalysed reaction is ATP + H2O + cellular proteinSide 1 = ADP + phosphate + cellular proteinSide 2.. In terms of biological role, part of the Sec protein translocase complex. Interacts with the SecYEG preprotein conducting channel. Has a central role in coupling the hydrolysis of ATP to the transfer of proteins into and across the cell membrane, serving both as a receptor for the preprotein-SecB complex and as an ATP-driven molecular motor driving the stepwise translocation of polypeptide chains across the membrane. The sequence is that of Protein translocase subunit SecA from Aromatoleum aromaticum (strain DSM 19018 / LMG 30748 / EbN1) (Azoarcus sp. (strain EbN1)).